The chain runs to 388 residues: Succinate--CoA ligase [ADP-forming] subunit beta (388 aa).

The ATP-grasp domain occupies 9 to 245 (KELLAGYGLP…KSQENERELK (237 aa)). ATP-binding positions include K46, 53–55 (GRG), E100, Y103, and E108. Positions 200 and 214 each coordinate Mg(2+). Substrate is bound by residues N265 and 322–324 (GIV).

The protein belongs to the succinate/malate CoA ligase beta subunit family. Heterotetramer of two alpha and two beta subunits. The cofactor is Mg(2+).

The enzyme catalyses succinate + ATP + CoA = succinyl-CoA + ADP + phosphate. The catalysed reaction is GTP + succinate + CoA = succinyl-CoA + GDP + phosphate. The protein operates within carbohydrate metabolism; tricarboxylic acid cycle; succinate from succinyl-CoA (ligase route): step 1/1. Succinyl-CoA synthetase functions in the citric acid cycle (TCA), coupling the hydrolysis of succinyl-CoA to the synthesis of either ATP or GTP and thus represents the only step of substrate-level phosphorylation in the TCA. The beta subunit provides nucleotide specificity of the enzyme and binds the substrate succinate, while the binding sites for coenzyme A and phosphate are found in the alpha subunit. The polypeptide is Succinate--CoA ligase [ADP-forming] subunit beta (Neisseria meningitidis serogroup C (strain 053442)).